A 247-amino-acid polypeptide reads, in one-letter code: Probable transcriptional regulatory protein ETA_14870 (247 aa).

The tract at residues 1–20 (MAGHSKWANTKHRKAAQDAK) is disordered.

The protein belongs to the TACO1 family.

Its subcellular location is the cytoplasm. The sequence is that of Probable transcriptional regulatory protein ETA_14870 from Erwinia tasmaniensis (strain DSM 17950 / CFBP 7177 / CIP 109463 / NCPPB 4357 / Et1/99).